The sequence spans 557 residues: Urocanate hydratase (557 aa).

NAD(+) contacts are provided by residues 52 to 53 (GG), Gln130, 176 to 178 (GMG), Glu196, Arg201, 242 to 243 (NA), 263 to 267 (QTSAH), 273 to 274 (YL), and Tyr322. Cys410 is a catalytic residue. Gly492 provides a ligand contact to NAD(+).

This sequence belongs to the urocanase family. NAD(+) serves as cofactor.

It is found in the cytoplasm. The enzyme catalyses 4-imidazolone-5-propanoate = trans-urocanate + H2O. It functions in the pathway amino-acid degradation; L-histidine degradation into L-glutamate; N-formimidoyl-L-glutamate from L-histidine: step 2/3. In terms of biological role, catalyzes the conversion of urocanate to 4-imidazolone-5-propionate. The chain is Urocanate hydratase from Allorhizobium ampelinum (strain ATCC BAA-846 / DSM 112012 / S4) (Agrobacterium vitis (strain S4)).